We begin with the raw amino-acid sequence, 91 residues long: MIKNLFIPFISQKKKEEENPGSVEFQVVNFTNKIRKLTSHFKLHPKDYLSQRGLRKILGKRQGLLSYLLERDKRRFEKLMSELNTRDSQIR.

This sequence belongs to the universal ribosomal protein uS15 family. In terms of assembly, part of the 30S ribosomal subunit.

Its subcellular location is the plastid. It is found in the chloroplast. This is Small ribosomal subunit protein uS15c (rps15) from Cicer arietinum (Chickpea).